The sequence spans 101 residues: Osteocalcin (101 aa).

The first 19 residues, 1–19 (MKLAILTVLLLGAAVLCLG), serve as a signal peptide directing secretion. Positions 20–52 (SKDADHSNSVGESHSSEAFISRQESASFARLKR) are excised as a propeptide. In terms of domain architecture, Gla spans 53–99 (SYGNNVGQGAAVGSPLESQREVCELNPDCDELADHIGFQEAYRRFYG). The Ca(2+) site is built by E69, E73, E76, and D82. 4-carboxyglutamate is present on residues E69, E73, and E76. C75 and C81 are joined by a disulfide.

Belongs to the osteocalcin/matrix Gla protein family. In terms of processing, gamma-carboxyglutamate residues are formed by vitamin K dependent carboxylation by GGCX. These residues are essential for the binding of calcium.

It localises to the secreted. Its function is as follows. The carboxylated form is one of the main organic components of the bone matrix, which constitutes 1-2% of the total bone protein. The carboxylated form binds strongly to apatite and calcium. The chain is Osteocalcin (bglap) from Xenopus laevis (African clawed frog).